The sequence spans 419 residues: UDP-N-acetylglucosamine 1-carboxyvinyltransferase (419 aa).

22–23 is a phosphoenolpyruvate binding site; that stretch reads KN. Arg93 lines the UDP-N-acetyl-alpha-D-glucosamine pocket. Cys117 acts as the Proton donor in catalysis. Cys117 bears the 2-(S-cysteinyl)pyruvic acid O-phosphothioketal mark. Residues 122 to 126, Asp308, and Ile330 each bind UDP-N-acetyl-alpha-D-glucosamine; that span reads RPVDL.

Belongs to the EPSP synthase family. MurA subfamily.

It is found in the cytoplasm. The catalysed reaction is phosphoenolpyruvate + UDP-N-acetyl-alpha-D-glucosamine = UDP-N-acetyl-3-O-(1-carboxyvinyl)-alpha-D-glucosamine + phosphate. It participates in cell wall biogenesis; peptidoglycan biosynthesis. In terms of biological role, cell wall formation. Adds enolpyruvyl to UDP-N-acetylglucosamine. The protein is UDP-N-acetylglucosamine 1-carboxyvinyltransferase of Pseudomonas putida (Arthrobacter siderocapsulatus).